The sequence spans 446 residues: COBRA-like protein 1 (446 aa).

The signal sequence occupies residues 1 to 28; that stretch reads MALLLLRMGVSVALLVAFFSSLIPSSEA. 9 N-linked (GlcNAc...) asparagine glycosylation sites follow: Asn37, Asn162, Asn170, Asn209, Asn234, Asn316, Asn331, Asn350, and Asn419. Ala420 carries GPI-anchor amidated alanine lipidation. Residues 421-446 constitute a propeptide, removed in mature form; sequence STRVMSSILLPFITIWTALTFLMVYA.

Belongs to the COBRA family.

The protein localises to the cell membrane. Functionally, involved in determining the orientation of cell expansion, probably by playing an important role in cellulose deposition. May act by recruiting cellulose synthesizing complexes to discrete positions on the cell surface. The polypeptide is COBRA-like protein 1 (BC1L6) (Oryza sativa subsp. japonica (Rice)).